The sequence spans 133 residues: Small ribosomal subunit protein uS8 (133 aa).

Belongs to the universal ribosomal protein uS8 family. As to quaternary structure, part of the 30S ribosomal subunit. Contacts proteins S5 and S12.

One of the primary rRNA binding proteins, it binds directly to 16S rRNA central domain where it helps coordinate assembly of the platform of the 30S subunit. The protein is Small ribosomal subunit protein uS8 of Prochlorococcus marinus (strain MIT 9301).